The chain runs to 329 residues: Phytochromobilin:ferredoxin oxidoreductase, chloroplastic (329 aa).

Residues 1–45 constitute a chloroplast transit peptide; sequence MALSMEFGFSIGSCFKAPNPPVLISASPNKINFTLRRRKKRFLLR.

Belongs to the HY2 family.

It is found in the plastid. Its subcellular location is the chloroplast. It catalyses the reaction (3Z)-phytochromobilin + 2 oxidized [2Fe-2S]-[ferredoxin] = biliverdin IXalpha + 2 reduced [2Fe-2S]-[ferredoxin] + 2 H(+). In terms of biological role, catalyzes the two-electron reduction of biliverdin IX-alpha to the tetrapyrrole chromophore phytochromobilin (PPhiB). In Arabidopsis thaliana (Mouse-ear cress), this protein is Phytochromobilin:ferredoxin oxidoreductase, chloroplastic.